A 137-amino-acid chain; its full sequence is Phosphoribosyl-AMP cyclohydrolase (137 aa).

Aspartate 84 lines the Mg(2+) pocket. Cysteine 85 provides a ligand contact to Zn(2+). Residues aspartate 86 and aspartate 88 each contribute to the Mg(2+) site. Cysteine 101 and cysteine 108 together coordinate Zn(2+).

Belongs to the PRA-CH family. As to quaternary structure, homodimer. Requires Mg(2+) as cofactor. Zn(2+) is required as a cofactor.

Its subcellular location is the cytoplasm. It carries out the reaction 1-(5-phospho-beta-D-ribosyl)-5'-AMP + H2O = 1-(5-phospho-beta-D-ribosyl)-5-[(5-phospho-beta-D-ribosylamino)methylideneamino]imidazole-4-carboxamide. It functions in the pathway amino-acid biosynthesis; L-histidine biosynthesis; L-histidine from 5-phospho-alpha-D-ribose 1-diphosphate: step 3/9. Functionally, catalyzes the hydrolysis of the adenine ring of phosphoribosyl-AMP. The chain is Phosphoribosyl-AMP cyclohydrolase from Chlorobium phaeovibrioides (strain DSM 265 / 1930) (Prosthecochloris vibrioformis (strain DSM 265)).